Consider the following 586-residue polypeptide: Protein CBFA2T2 (586 aa).

Residues 1 to 95 (MVGIPGPYQF…SSSSSLANQQ (95 aa)) are disordered. Polar residues predominate over residues 56 to 68 (SSHSNGINHSPPT). The segment covering 77–90 (QRSSNGPSSSSSSS) has biased composition (low complexity). Residues 102 to 197 (VRQLSKLKRF…TPSQYLAQHE (96 aa)) enclose the TAFH domain. 2 disordered regions span residues 204–242 (STSS…AEPP) and 387–417 (IRKG…FGSR). Basic and acidic residues predominate over residues 228-237 (DRREEERETA). Positions 399–409 (SPSSTDSGASD) are enriched in low complexity. The stretch at 429–481 (RKAEEAVNEVKRQAMSEVQKAVSEAEQKAFEMIASERARMEQTIVDAKRRAAE) forms a coiled coil. 8 residues coordinate Zn(2+): cysteine 497, cysteine 500, cysteine 508, cysteine 511, cysteine 517, cysteine 521, histidine 529, and cysteine 533. An MYND-type zinc finger spans residues 497-533 (CWNCGRKASETCSGCNIARYCGSFCQHKDWEKHHRIC). Residues 561–586 (SPTLERSSSATSRSSTPASVTAVDGL) form a disordered region. Residues 566–586 (RSSSATSRSSTPASVTAVDGL) show a composition bias toward low complexity.

It is found in the nucleus. In terms of biological role, may act as a transcriptional corepressor. The sequence is that of Protein CBFA2T2 (cbfa2t2) from Xenopus laevis (African clawed frog).